The chain runs to 328 residues: Pyruvate dehydrogenase E1 component subunit beta (328 aa).

Glutamate 60 contacts thiamine diphosphate. Residues isoleucine 113, isoleucine 162, and asparagine 166 each contribute to the K(+) site.

In terms of assembly, heterodimer of an alpha and a beta chain. Thiamine diphosphate serves as cofactor.

The protein localises to the plastid. Its subcellular location is the chloroplast. It carries out the reaction N(6)-[(R)-lipoyl]-L-lysyl-[protein] + pyruvate + H(+) = N(6)-[(R)-S(8)-acetyldihydrolipoyl]-L-lysyl-[protein] + CO2. Its function is as follows. The pyruvate dehydrogenase complex catalyzes the overall conversion of pyruvate to acetyl-CoA and CO(2). It contains multiple copies of three enzymatic components: pyruvate dehydrogenase (E1), dihydrolipoamide acetyltransferase (E2) and lipoamide dehydrogenase (E3). The chain is Pyruvate dehydrogenase E1 component subunit beta (pdhB) from Staurastrum punctulatum (Green alga).